Reading from the N-terminus, the 156-residue chain is Transcription elongation factor GreA (156 aa).

A coiled-coil region spans residues 1–32 (MKKVRLTREGYEKLKKELEDLKRKFMYEISER).

It belongs to the GreA/GreB family.

Functionally, necessary for efficient RNA polymerase transcription elongation past template-encoded arresting sites. The arresting sites in DNA have the property of trapping a certain fraction of elongating RNA polymerases that pass through, resulting in locked ternary complexes. Cleavage of the nascent transcript by cleavage factors such as GreA or GreB allows the resumption of elongation from the new 3'terminus. GreA releases sequences of 2 to 3 nucleotides. This is Transcription elongation factor GreA from Thermotoga sp. (strain RQ2).